We begin with the raw amino-acid sequence, 540 residues long: Chaperonin GroEL (540 aa).

Residues 29–32, 86–90, glycine 413, 476–478, and aspartate 492 contribute to the ATP site; these read TLGP, DGTTT, and NAA.

The protein belongs to the chaperonin (HSP60) family. As to quaternary structure, forms a cylinder of 14 subunits composed of two heptameric rings stacked back-to-back. Interacts with the co-chaperonin GroES.

It is found in the cytoplasm. The catalysed reaction is ATP + H2O + a folded polypeptide = ADP + phosphate + an unfolded polypeptide.. In terms of biological role, together with its co-chaperonin GroES, plays an essential role in assisting protein folding. The GroEL-GroES system forms a nano-cage that allows encapsulation of the non-native substrate proteins and provides a physical environment optimized to promote and accelerate protein folding. In Streptococcus gordonii, this protein is Chaperonin GroEL.